The chain runs to 156 residues: Small ribosomal subunit protein uS7 (156 aa).

It belongs to the universal ribosomal protein uS7 family. In terms of assembly, part of the 30S ribosomal subunit. Contacts proteins S9 and S11.

Functionally, one of the primary rRNA binding proteins, it binds directly to 16S rRNA where it nucleates assembly of the head domain of the 30S subunit. Is located at the subunit interface close to the decoding center, probably blocks exit of the E-site tRNA. In Dichelobacter nodosus (strain VCS1703A), this protein is Small ribosomal subunit protein uS7.